Here is a 457-residue protein sequence, read N- to C-terminus: Adenylosuccinate synthetase isozyme 2 A (457 aa).

Residues 40 to 46 and 68 to 70 each bind GTP; these read GDEGKGK and GHT. Aspartate 41 serves as the catalytic Proton acceptor. Residues aspartate 41 and glycine 68 each coordinate Mg(2+). Aspartate 41 contacts substrate. Residues 41–44, 66–69, threonine 163, arginine 177, asparagine 256, threonine 271, and arginine 335 contribute to the IMP site; these read DEGK and NAGH. Histidine 69 acts as the Proton donor in catalysis. Residue 331-337 coordinates substrate; it reads VTTGRKR. GTP-binding positions include arginine 337, 363–365, and 445–448; these read KLD and GVGK.

This sequence belongs to the adenylosuccinate synthetase family. Homodimer. Mg(2+) is required as a cofactor.

Its subcellular location is the cytoplasm. It localises to the mitochondrion. The enzyme catalyses IMP + L-aspartate + GTP = N(6)-(1,2-dicarboxyethyl)-AMP + GDP + phosphate + 2 H(+). It participates in purine metabolism; AMP biosynthesis via de novo pathway; AMP from IMP: step 1/2. Inhibited competitively by AMP and IMP and non-competitively by fructose 1,6-bisphosphate. Its function is as follows. Plays an important role in the de novo pathway and in the salvage pathway of purine nucleotide biosynthesis. Catalyzes the first committed step in the biosynthesis of AMP from IMP. This chain is Adenylosuccinate synthetase isozyme 2 A (adss2-a), found in Xenopus tropicalis (Western clawed frog).